The following is a 45-amino-acid chain: Large ribosomal subunit protein bL34 (45 aa).

This sequence belongs to the bacterial ribosomal protein bL34 family.

The polypeptide is Large ribosomal subunit protein bL34 (Clavibacter michiganensis subsp. michiganensis (strain NCPPB 382)).